Reading from the N-terminus, the 455-residue chain is Beta-glucosidase A (455 aa).

E165 functions as the Proton donor in the catalytic mechanism. Residue E363 is the Nucleophile of the active site.

This sequence belongs to the glycosyl hydrolase 1 family.

It carries out the reaction Hydrolysis of terminal, non-reducing beta-D-glucosyl residues with release of beta-D-glucose.. In Caldicellulosiruptor saccharolyticus (Caldocellum saccharolyticum), this protein is Beta-glucosidase A (bglA).